The following is a 272-amino-acid chain: Putative phosphoenolpyruvate synthase regulatory protein (272 aa).

Gly151–Thr158 serves as a coordination point for ADP.

The protein belongs to the pyruvate, phosphate/water dikinase regulatory protein family. PSRP subfamily.

The enzyme catalyses [pyruvate, water dikinase] + ADP = [pyruvate, water dikinase]-phosphate + AMP + H(+). It carries out the reaction [pyruvate, water dikinase]-phosphate + phosphate + H(+) = [pyruvate, water dikinase] + diphosphate. Bifunctional serine/threonine kinase and phosphorylase involved in the regulation of the phosphoenolpyruvate synthase (PEPS) by catalyzing its phosphorylation/dephosphorylation. The sequence is that of Putative phosphoenolpyruvate synthase regulatory protein from Desulfotalea psychrophila (strain LSv54 / DSM 12343).